A 629-amino-acid chain; its full sequence is Neuronal acetylcholine receptor subunit alpha-4 (629 aa).

The first 30 residues, 1–30 (MEIGGSGAPPPLLLLPLLLLLGTGLLPASS), serve as a signal peptide directing secretion. At 32–249 (IETRAHAEER…IIRRLPLFYT (218 aa)) the chain is on the extracellular side. The N-linked (GlcNAc...) asparagine glycan is linked to N59. The Ca(2+) site is built by V78 and E80. 2 N-linked (GlcNAc...) asparagine glycosylation sites follow: N109 and N176. 2 disulfides stabilise this stretch: C163–C177 and C227–C228. A helical transmembrane segment spans residues 250-270 (INLIIPCLLISCLTVLVFYLP). C273 carries S-palmitoyl cysteine lipidation. 2 helical membrane-spanning segments follow: residues 279 to 299 (LCIS…EIIP) and 312 to 332 (LLFT…VLNV). Over 333–603 (HHRSPRTHTM…KYVAMVIDRI (271 aa)) the chain is Cytoplasmic. 2 disordered regions span residues 420-459 (ETQP…NSSG) and 503-529 (SLTE…SDQT). S427 is subject to Phosphoserine. The segment covering 431-442 (KVPDLKTSEVEK) has biased composition (basic and acidic residues). Over residues 449–459 (PGSCHPPNSSG) the composition is skewed to low complexity. The span at 504-529 (LTESKPTGSPASLKTRPSQLPVSDQT) shows a compositional bias: polar residues. A phosphoserine mark is found at S540 and S543. Residues 604 to 624 (FLWMFIIVCLLGTVGLFLPPW) form a helical membrane-spanning segment.

This sequence belongs to the ligand-gated ion channel (TC 1.A.9) family. Acetylcholine receptor (TC 1.A.9.1) subfamily. Alpha-4/CHRNA4 sub-subfamily. Neuronal AChR is composed of two different types of subunits: alpha and beta. CHRNA4 forms heteropentameric neuronal acetylcholine receptors with CHRNB2 and CHRNB4, as well as CHRNA5 and CHRNB3 as accesory subunits. Found in two major stoichiometric forms, LS (low agonist sensitivity): (CHRNA4)3:(CHRNB2)2 and HS (high agonist sensitivity): (CHRNA4)2:(CHRNB2)3, the two stoichiometric forms differ in their unitary conductance, calcium permeability, ACh sensitivity and potentiation by divalent cation. Cells produce predominantly an (CHRNA4)3:(CHRNB2)2 nAChR. The (CHRNA4)2:(CHRNB2)3 expression is selectively up-regulated by nicotine and has lower single channel conductance and calcium permeability. In the striatum, also forms CHRNA4:CHRNA6:CHRNB2 complexes. Also found in the stoichiometric form: (CHRNA4:CHRNB2)2:CHRNB3. Interacts with RIC3; which is required for proper folding and assembly. Interacts with LYPD6.

It localises to the synaptic cell membrane. The protein localises to the cell membrane. The catalysed reaction is K(+)(in) = K(+)(out). The enzyme catalyses Na(+)(in) = Na(+)(out). It carries out the reaction Ca(2+)(in) = Ca(2+)(out). Its activity is regulated as follows. Activated by a myriad of ligands such as acetylcholine, cytisine, nicotine, choline and epibatidine. Channel potentiation by calcium is stoichiometry-selective, CHRNA4:CHRNB2 nACh receptor is achieved by calcium association with topographically distinct sites framed by anionic residues within the CHRNA4 subunit and between the CHRNA4 and CHRNB2 subunits. nAChR activity is inhibited by the antagonist alpha-conotoxins BuIA, PnIA, GID and MII, small disulfide-constrained peptides from cone snails. Its function is as follows. Component of neuronal acetylcholine receptors (nAChRs) that function as pentameric, ligand-gated cation channels with high calcium permeability among other activities. nAChRs are excitatory neurotrasnmitter receptors formed by a collection of nAChR subunits known to mediate synaptic transmission in the nervous system and the neuromuscular junction. Each nAchR subunit confers differential attributes to channel properties, including activation, deactivation and desensitization kinetics, pH sensitivity, cation permeability, and binding to allosteric modulators. CHRNA4 forms heteropentameric neuronal acetylcholine receptors with CHRNB2 and CHRNB4, as well as CHRNA5 and CHRNB3 as accesory subunits. Is the most abundant nAChR subtype expressed in the central nervous system. Found in two major stoichiometric forms,(CHRNA4)3:(CHRNB2)2 and (CHRNA4)2:(CHRNB2)3, the two stoichiometric forms differ in their unitary conductance, calcium permeability, ACh sensitivity and potentiation by divalent cation. Involved in the modulation of calcium-dependent signaling pathways, influences the release of neurotransmitters, including dopamine, glutamate and GABA. The chain is Neuronal acetylcholine receptor subunit alpha-4 (Chrna4) from Mus musculus (Mouse).